Consider the following 28-residue polypeptide: Palustrin-1a (28 aa).

C22 and C28 are oxidised to a cystine.

As to expression, expressed by the skin glands.

The protein resides in the secreted. Functionally, antimicrobial activity against Gram-negative bacterium E.coli. The polypeptide is Palustrin-1a (Lithobates palustris (Pickerel frog)).